Here is a 412-residue protein sequence, read N- to C-terminus: Argininosuccinate synthase (412 aa).

Residues 20-28 (AYSGGLDTS) and A48 contribute to the ATP site. Y100 and S105 together coordinate L-citrulline. G130 is an ATP binding site. 3 residues coordinate L-aspartate: T132, N136, and D137. N136 serves as a coordination point for L-citrulline. Residues R140, S189, S198, E274, and Y286 each coordinate L-citrulline.

The protein belongs to the argininosuccinate synthase family. Type 1 subfamily. In terms of assembly, homotetramer.

The protein localises to the cytoplasm. It carries out the reaction L-citrulline + L-aspartate + ATP = 2-(N(omega)-L-arginino)succinate + AMP + diphosphate + H(+). The protein operates within amino-acid biosynthesis; L-arginine biosynthesis; L-arginine from L-ornithine and carbamoyl phosphate: step 2/3. In Shewanella pealeana (strain ATCC 700345 / ANG-SQ1), this protein is Argininosuccinate synthase.